The following is a 721-amino-acid chain: Leucine-rich repeat flightless-interacting protein 2 (721 aa).

The interval 1 to 370 (MGTPASGRKR…YMQGLKELKE (370 aa)) is DVL3-binding. The residue at position 18 (Ser18) is a Phosphoserine. The stretch at 22 to 49 (EALSNIAREAEARLAAKRAARAEARDIR) forms a coiled coil. A phosphoserine mark is found at Gly96, Leu101, Tyr168, Ser173, Ser190, and Ser202. Disordered regions lie at residues 232–262 (SARS…ESVV) and 295–338 (KSDK…IDPD). 2 stretches are compositionally biased toward polar residues: residues 237–251 (PGFT…VSSD) and 305–338 (TRPS…IDPD). Phosphoserine occurs at positions 309, 312, 320, 324, and 328. Position 331 is a phosphothreonine (Thr331). Residues Ser332 and Ser333 each carry the phosphoserine modification. 2 coiled-coil regions span residues 349-524 (DLKD…GEKH) and 566-714 (LDVR…KANR).

This sequence belongs to the LRRFIP family. As to quaternary structure, interacts (via N-terminus) with DVL3. Interacts with FLII. Weakly interacts with MYD88 in resting cells. Following LPS-stimulation, the interaction with MYD88 is rapidly enhanced; the complex gradually dissociates to basal levels after 6 hours of stimulation. Interaction with MYD88 is regulated by LPS-induced phosphorylation at Ser-202. In the presence of LPS, competes with FLII for MYD88-binding. In terms of processing, ser-190 and Ser-202 are phosphorylated in response to LPS stimulation. Ser-202 phosphorylation regulates the LPS-induced interaction with MYD88. As to expression, widely expressed, with highest levels in heart and skeletal muscle.

May function as activator of the canonical Wnt signaling pathway, in association with DVL3, upstream of CTNNB1/beta-catenin. Positively regulates Toll-like receptor (TLR) signaling in response to agonist probably by competing with the negative FLII regulator for MYD88-binding. In Homo sapiens (Human), this protein is Leucine-rich repeat flightless-interacting protein 2 (LRRFIP2).